The sequence spans 94 residues: Large ribosomal subunit protein uL23 (94 aa).

The protein belongs to the universal ribosomal protein uL23 family. Part of the 50S ribosomal subunit. Contacts protein L29, and trigger factor when it is bound to the ribosome.

Its function is as follows. One of the early assembly proteins it binds 23S rRNA. One of the proteins that surrounds the polypeptide exit tunnel on the outside of the ribosome. Forms the main docking site for trigger factor binding to the ribosome. The protein is Large ribosomal subunit protein uL23 of Treponema pallidum (strain Nichols).